The following is a 742-amino-acid chain: 5-methyltetrahydropteroyltriglutamate--homocysteine methyltransferase (742 aa).

Residues 18 to 21 (REWK) and lysine 112 contribute to the 5-methyltetrahydropteroyltri-L-glutamate site. L-homocysteine-binding positions include 420 to 422 (IGS) and glutamate 473. L-methionine is bound by residues 420–422 (IGS) and glutamate 473. Tryptophan 550 serves as a coordination point for 5-methyltetrahydropteroyltri-L-glutamate. Aspartate 588 serves as a coordination point for L-homocysteine. Position 588 (aspartate 588) interacts with L-methionine. Glutamate 594 provides a ligand contact to 5-methyltetrahydropteroyltri-L-glutamate. The Zn(2+) site is built by histidine 630, cysteine 632, and glutamate 654. Histidine 683 acts as the Proton donor in catalysis. Cysteine 715 serves as a coordination point for Zn(2+).

The protein belongs to the vitamin-B12 independent methionine synthase family. The cofactor is Zn(2+).

It catalyses the reaction 5-methyltetrahydropteroyltri-L-glutamate + L-homocysteine = tetrahydropteroyltri-L-glutamate + L-methionine. Its pathway is amino-acid biosynthesis; L-methionine biosynthesis via de novo pathway; L-methionine from L-homocysteine (MetE route): step 1/1. Functionally, catalyzes the transfer of a methyl group from 5-methyltetrahydrofolate to homocysteine resulting in methionine formation. In Staphylococcus aureus (strain Mu3 / ATCC 700698), this protein is 5-methyltetrahydropteroyltriglutamate--homocysteine methyltransferase.